A 336-amino-acid chain; its full sequence is Ankyrin repeat and SOCS box protein 1 (336 aa).

ANK repeat units follow at residues cysteine 37–glutamate 69, leucine 78–leucine 107, lysine 111–glycine 140, histidine 144–valine 173, leucine 192–phenylalanine 221, and serine 236–leucine 266. The SOCS box domain maps to leucine 287 to glutamate 336.

This sequence belongs to the ankyrin SOCS box (ASB) family. As to quaternary structure, interacts with CUL5 and RNF7. Highest expression in testis, spleen, bone marrow and salivary gland.

The protein operates within protein modification; protein ubiquitination. In terms of biological role, probable substrate-recognition component of a SCF-like ECS (Elongin-Cullin-SOCS-box protein) E3 ligase complex which mediates the ubiquitination and subsequent proteasomal degradation of target proteins. Mediates Notch-induced ubiquitination and degradation of TCF3/E2A and JAK2. May play a role in testis development. This chain is Ankyrin repeat and SOCS box protein 1 (Asb1), found in Mus musculus (Mouse).